We begin with the raw amino-acid sequence, 308 residues long: Polyketide transferase claH (308 aa).

The abhydrolase domain stretch occupies residues 50–280 (SDIAVYFSQQ…RVEVAAGKSH (231 aa)).

The protein belongs to the polyketide transferase af380 family.

It functions in the pathway secondary metabolite biosynthesis. In terms of biological role, polyketide transferase; part of the cla gene cluster that produces clavatol and ortho-quinone methide. The clavatol biosynthesis cluster cla and the terrestric acid cluster tra are both involved in the production of peniphenones and penilactones. The non-reducing PKS claF is responsible for the formation of clavatol from successive condensations of 3 malonyl-CoA units, presumably with a simple acetyl-CoA starter unit, and 2 methylation steps. The esterase claE probably collaborates with claF by catalyzing the hydrolysis of ACP-bound acyl intermediates to free the ACP from stalled intermediates. The clavatol oxidase claD then converts clavatol to hydroxyclavatol. Spontaneous dehydration of hydroxyclavatol leads to the accumulation of the highly active ortho-quinone methide. On the other hand, the PKS-NRPS hybrid traA is involved in the formation of crustosic acid, with the help of traB and traD. The polyketide synthase module (PKS) of traA is responsible for the synthesis of the polyketide backbone via the condensation of an acetyl-CoA starter unit with 3 malonyl-CoA units. The downstream nonribosomal peptide synthetase (NRPS) module then amidates the carboxyl end of the polyketide with L-malic acid. Because traA lacks a designated enoylreductase (ER) domain, the required activity is provided the enoyl reductase traG. Crustosic acid undergoes decarboxylation and isomerization to the terrestric acid, catalyzed by the 2-oxoglutarate-dependent dioxygenase traH. Both acids are further converted to the 2 gamma-butyrolactones (R)-5-methyltetronic acid and (S)-5-carboxylmethyltetronic acid, with involvement of the cytochrome P450 monooxygenase claJ. Spontaneous addition of the methide to these gamma-butyrolactones leads to peniphenone D and penilactone D, which undergo again stereospecific attacking by methide to give penilactones A and B. The function of the polyketide transferase claH has not been investigated yet. In Penicillium crustosum (Blue mold fungus), this protein is Polyketide transferase claH.